A 265-amino-acid chain; its full sequence is Tryptophan synthase alpha chain (265 aa).

Active-site proton acceptor residues include Glu49 and Glu60.

This sequence belongs to the TrpA family. As to quaternary structure, tetramer of two alpha and two beta chains.

It carries out the reaction (1S,2R)-1-C-(indol-3-yl)glycerol 3-phosphate + L-serine = D-glyceraldehyde 3-phosphate + L-tryptophan + H2O. The protein operates within amino-acid biosynthesis; L-tryptophan biosynthesis; L-tryptophan from chorismate: step 5/5. In terms of biological role, the alpha subunit is responsible for the aldol cleavage of indoleglycerol phosphate to indole and glyceraldehyde 3-phosphate. This is Tryptophan synthase alpha chain from Herminiimonas arsenicoxydans.